The following is a 620-amino-acid chain: Glutathione-regulated potassium-efflux system protein KefC (620 aa).

The next 12 helical transmembrane spans lie at 4–24 (HTLI…PIAV), 26–46 (LGLG…PWGL), 54–74 (SILH…GLEL), 90–110 (GALQ…FLGL), 114–134 (VAEL…MQAM), 149–169 (FAVL…IPLL), 178–198 (MGAF…VVLL), 218–238 (VFSA…EEVG), 270–290 (GLLL…GTLL), 294–314 (LRIV…LWLI), 327–347 (WFAV…GAAQ), and 359–379 (SLTL…VILN). An RCK N-terminal domain is found at 399–518 (QPRVIIAGFG…AGVEKPERET (120 aa)). The segment at 597-620 (GWQGTEEGKHTGNMADEPETKPSS) is disordered.

It belongs to the monovalent cation:proton antiporter 2 (CPA2) transporter (TC 2.A.37) family. KefC subfamily. Homodimer. Interacts with the regulatory subunit KefF.

The protein resides in the cell inner membrane. Pore-forming subunit of a potassium efflux system that confers protection against electrophiles. Catalyzes K(+)/H(+) antiport. This Escherichia fergusonii (strain ATCC 35469 / DSM 13698 / CCUG 18766 / IAM 14443 / JCM 21226 / LMG 7866 / NBRC 102419 / NCTC 12128 / CDC 0568-73) protein is Glutathione-regulated potassium-efflux system protein KefC.